A 37-amino-acid polypeptide reads, in one-letter code: Mu-cyrtautoxin-As1a (37 aa).

Disulfide bonds link cysteine 1–cysteine 15, cysteine 8–cysteine 19, cysteine 14–cysteine 35, and cysteine 26–cysteine 31.

This sequence belongs to the neurotoxin 13 (insecticidal toxin ABC) family. 01 (Aps III) subfamily. Expressed by the venom gland.

Its subcellular location is the secreted. Functionally, the recombinant mu-cyrtautoxin-As1a potently and voltage-independently blocks voltage-gated sodium channels (Nav) of insects. It acts by pluging the outer vestibule of the channel. It acts in combination with a weak (30%) voltage-independent block of insect voltage-gated calcium (Cav) channels (low-voltage and high-voltage channels). Tested on DUM neurons, it inhibits sodium currents with an IC(50) of 540 nM (and a Hill coefficient &gt;1, reflecting an incomplete block at higher concentrations). In vivo, it induces flaccid paralysis in adult Australian sheep blowfly Lucilia cuprina. It is both paralytic and lethal, when injected into lepidopteran larvae. It is a slower acting toxin, being lethal at 24 hours, but not paralytic at 1 hour post-injection. This is Mu-cyrtautoxin-As1a from Apomastus schlingeri (Trap-door spider).